The chain runs to 379 residues: L-lactate dehydrogenase (379 aa).

An FMN hydroxy acid dehydrogenase domain is found at 1-379 (MIISASTDYR…IGRDSLVNLP (379 aa)). Position 24 (Tyr24) interacts with substrate. The FMN site is built by Ser106 and Gln127. Tyr129 provides a ligand contact to substrate. Residue Thr155 participates in FMN binding. Position 164 (Arg164) interacts with substrate. Lys251 is an FMN binding site. Catalysis depends on His275, which acts as the Proton acceptor. Arg278 serves as a coordination point for substrate. 306-330 (DSGIRTGLDVVRMLALGADTVLLGR) contributes to the FMN binding site.

Belongs to the FMN-dependent alpha-hydroxy acid dehydrogenase family. FMN is required as a cofactor.

It localises to the cell inner membrane. It carries out the reaction (S)-lactate + A = pyruvate + AH2. Functionally, catalyzes the conversion of L-lactate to pyruvate. Is coupled to the respiratory chain. This is L-lactate dehydrogenase from Stenotrophomonas maltophilia (strain R551-3).